The sequence spans 117 residues: Hydrogenase maturation factor HypA (117 aa).

His-2 contacts Ni(2+). Positions 73, 76, 89, and 92 each coordinate Zn(2+).

It belongs to the HypA/HybF family.

Its function is as follows. Involved in the maturation of [NiFe] hydrogenases. Required for nickel insertion into the metal center of the hydrogenase. The polypeptide is Hydrogenase maturation factor HypA (Chlorobium luteolum (strain DSM 273 / BCRC 81028 / 2530) (Pelodictyon luteolum)).